Here is a 204-residue protein sequence, read N- to C-terminus: Signal peptidase I (204 aa).

Residues 1–10 are Cytoplasmic-facing; it reads MNSFKNFLKE. The chain crosses the membrane as a helical span at residues 11 to 30; that stretch reads WGLFLLILSLLALSRIFFWS. The Extracellular segment spans residues 31 to 204; the sequence is NVRVEGHSMD…LWPITRIGTF (174 aa). Catalysis depends on residues serine 38 and lysine 76.

It belongs to the peptidase S26 family.

Its subcellular location is the cell membrane. The catalysed reaction is Cleavage of hydrophobic, N-terminal signal or leader sequences from secreted and periplasmic proteins.. The sequence is that of Signal peptidase I (lepB) from Streptococcus pneumoniae serotype 4 (strain ATCC BAA-334 / TIGR4).